Here is a 214-residue protein sequence, read N- to C-terminus: Transcriptional regulatory protein ComA (214 aa).

The Response regulatory domain occupies 3–121; sequence KILVIDDHPA…KITQYIYHVL (119 aa). Position 55 is a 4-aspartylphosphate (Asp-55). Positions 147–212 constitute an HTH luxR-type domain; it reads SQKEQDVLTP…EAVLIAKSDG (66 aa). The segment at residues 171 to 190 is a DNA-binding region (H-T-H motif); sequence NQEIADALHLSKRSIEYSLT.

In terms of processing, phosphorylated by ComP.

The protein localises to the cytoplasm. Response regulator in the two-component regulatory system ComP/ComA involved in a major quorum response pathway that regulates the development of genetic competence. Regulates directly the expression of over 20 genes, including genes of the srfA operon, degQ, rapA, rapC, rapE, rapF, etc. Regulates indirectly, through the regulation of comK transcription, the expression of late competence genes. The polypeptide is Transcriptional regulatory protein ComA (comA) (Bacillus subtilis (strain 168)).